The sequence spans 619 residues: ATP-dependent zinc metalloprotease FtsH 1 (619 aa).

The Cytoplasmic portion of the chain corresponds to 1–8 (MADEKRPA). The chain crosses the membrane as a helical span at residues 9 to 29 (SRAWLGYLLIAVGILVLSGIV). Topologically, residues 30-108 (RSRGRPLVPY…RIEAKSPQTS (79 aa)) are periplasmic. Residues 109 to 129 (VWMQVAIWMLPLVLINAAFFM) traverse the membrane as a helical segment. Residues 130–619 (MLRRAGQGAG…KIAVGPPSAA (490 aa)) are Cytoplasmic-facing. 203–210 (GPPGTGKT) lines the ATP pocket. Zn(2+) is bound at residue histidine 426. Glutamate 427 is an active-site residue. Residues histidine 430 and aspartate 503 each contribute to the Zn(2+) site.

The protein in the central section; belongs to the AAA ATPase family. In the C-terminal section; belongs to the peptidase M41 family. In terms of assembly, homohexamer. Zn(2+) is required as a cofactor.

Its subcellular location is the cell inner membrane. Its function is as follows. Acts as a processive, ATP-dependent zinc metallopeptidase for both cytoplasmic and membrane proteins. Plays a role in the quality control of integral membrane proteins. The chain is ATP-dependent zinc metalloprotease FtsH 1 from Sorangium cellulosum (strain So ce56) (Polyangium cellulosum (strain So ce56)).